A 511-amino-acid polypeptide reads, in one-letter code: Phosphoenolpyruvate carboxylase (511 aa).

The protein belongs to the PEPCase type 2 family. In terms of assembly, homotetramer. It depends on Mg(2+) as a cofactor.

The catalysed reaction is oxaloacetate + phosphate = phosphoenolpyruvate + hydrogencarbonate. Allosterically inhibited by L-aspartate and L-malate. PEPC activity is not affected by allosteric activators of E.coli PEPC such as glucose 6-phosphate, fructose 1,6-bisphosphate, and acetyl coenzyme A. Catalyzes the irreversible beta-carboxylation of phosphoenolpyruvate (PEP) to form oxaloacetate (OAA), a four-carbon dicarboxylic acid source for the tricarboxylic acid cycle. This Saccharolobus solfataricus (strain ATCC 35092 / DSM 1617 / JCM 11322 / P2) (Sulfolobus solfataricus) protein is Phosphoenolpyruvate carboxylase.